Consider the following 447-residue polypeptide: N-succinylarginine dihydrolase (447 aa).

Residues 19-28, N110, and 137-138 each bind substrate; these read AGLSFGNEAS and HR. Residue E174 is part of the active site. Residue R214 coordinates substrate. H250 is a catalytic residue. Substrate-binding residues include D252 and N365. Residue C371 is the Nucleophile of the active site.

It belongs to the succinylarginine dihydrolase family. As to quaternary structure, homodimer.

The catalysed reaction is N(2)-succinyl-L-arginine + 2 H2O + 2 H(+) = N(2)-succinyl-L-ornithine + 2 NH4(+) + CO2. Its pathway is amino-acid degradation; L-arginine degradation via AST pathway; L-glutamate and succinate from L-arginine: step 2/5. In terms of biological role, catalyzes the hydrolysis of N(2)-succinylarginine into N(2)-succinylornithine, ammonia and CO(2). This chain is N-succinylarginine dihydrolase, found in Acinetobacter baumannii (strain ATCC 17978 / DSM 105126 / CIP 53.77 / LMG 1025 / NCDC KC755 / 5377).